Consider the following 552-residue polypeptide: Cilia- and flagella- associated protein 210 (552 aa).

4 coiled-coil regions span residues 53–143, 186–307, 348–409, and 460–488; these read DEWK…NAKQ, EEQL…KKRL, IARD…VMKA, and TEAL…TTNK. The tract at residues 216–238 is disordered; the sequence is KDHLKQIKEHEEEEERRKKYEEK.

Microtubule inner protein component of sperm flagellar doublet microtubules. Expressed in airway epithelial cells.

The protein localises to the cytoplasm. The protein resides in the cytoskeleton. It localises to the cilium axoneme. It is found in the flagellum axoneme. In terms of biological role, microtubule inner protein (MIP) part of the dynein-decorated doublet microtubules (DMTs) in cilia axoneme, which is required for motile cilia beating. This Homo sapiens (Human) protein is Cilia- and flagella- associated protein 210.